Here is a 493-residue protein sequence, read N- to C-terminus: Alpha-amylase-related protein (493 aa).

A signal peptide spans 1-19; sequence MFKFALTLTLCLAGSLSLA. Gln20 bears the Pyrrolidone carboxylic acid mark. A disulfide bridge connects residues Cys47 and Cys103. Ca(2+)-binding residues include Asn117, Gln168, and Asp177. Cys156 and Cys170 are joined by a disulfide. A chloride-binding site is contributed by Arg205. Residue Asp207 is the Nucleophile of the active site. His211 contacts Ca(2+). Catalysis depends on Glu244, which acts as the Proton donor. 2 residues coordinate chloride: Asn307 and Arg342. Disulfide bonds link Cys375–Cys381, Cys417–Cys440, and Cys447–Cys459.

Belongs to the glycosyl hydrolase 13 family. As to quaternary structure, monomer. Ca(2+) is required as a cofactor. The cofactor is chloride.

It is found in the secreted. The enzyme catalyses Endohydrolysis of (1-&gt;4)-alpha-D-glucosidic linkages in polysaccharides containing three or more (1-&gt;4)-alpha-linked D-glucose units.. This chain is Alpha-amylase-related protein (Amyrel), found in Drosophila simulans (Fruit fly).